Reading from the N-terminus, the 380-residue chain is Cytochrome b (380 aa).

4 helical membrane passes run 33 to 53 (FGSL…FLAM), 77 to 98 (WLIR…FLHV), 113 to 133 (WNMG…GYVL), and 178 to 198 (FFAF…VHLL). H83 and H97 together coordinate heme. 2 residues coordinate heme: H182 and H196. H201 lines the a ubiquinone pocket. Transmembrane regions (helical) follow at residues 226–246 (VKDF…TLFF), 288–308 (LGGV…PLLH), 320–340 (ITQT…WIGG), and 347–367 (FIII…IFMP).

It belongs to the cytochrome b family. In terms of assembly, the cytochrome bc1 complex contains 11 subunits: 3 respiratory subunits (MT-CYB, CYC1 and UQCRFS1), 2 core proteins (UQCRC1 and UQCRC2) and 6 low-molecular weight proteins (UQCRH/QCR6, UQCRB/QCR7, UQCRQ/QCR8, UQCR10/QCR9, UQCR11/QCR10 and a cleavage product of UQCRFS1). This cytochrome bc1 complex then forms a dimer. Heme is required as a cofactor.

The protein resides in the mitochondrion inner membrane. Component of the ubiquinol-cytochrome c reductase complex (complex III or cytochrome b-c1 complex) that is part of the mitochondrial respiratory chain. The b-c1 complex mediates electron transfer from ubiquinol to cytochrome c. Contributes to the generation of a proton gradient across the mitochondrial membrane that is then used for ATP synthesis. This is Cytochrome b (MT-CYB) from Microtus arvalis (Common vole).